We begin with the raw amino-acid sequence, 260 residues long: Ribonuclease HII (260 aa).

Positions 75–260 constitute an RNase H type-2 domain; the sequence is ELIAGVDEVG…FEPIKSIIKK (186 aa). The a divalent metal cation site is built by Asp81, Glu82, and Asp173.

Belongs to the RNase HII family. It depends on Mn(2+) as a cofactor. Requires Mg(2+) as cofactor.

The protein resides in the cytoplasm. The enzyme catalyses Endonucleolytic cleavage to 5'-phosphomonoester.. In terms of biological role, endonuclease that specifically degrades the RNA of RNA-DNA hybrids. The polypeptide is Ribonuclease HII (Streptococcus thermophilus (strain CNRZ 1066)).